A 701-amino-acid chain; its full sequence is DNA ligase (701 aa).

Residues 43–47 (DADYD), 92–93 (SL), and glutamate 126 each bind NAD(+). Residue lysine 128 is the N6-AMP-lysine intermediate of the active site. NAD(+) is bound by residues arginine 149, glutamate 186, lysine 302, and lysine 326. The Zn(2+) site is built by cysteine 417, cysteine 420, cysteine 440, and cysteine 446. In terms of domain architecture, BRCT spans 622 to 701 (ETGSPVTGKT…DEWLALIGET (80 aa)).

It belongs to the NAD-dependent DNA ligase family. LigA subfamily. Mg(2+) is required as a cofactor. It depends on Mn(2+) as a cofactor.

It catalyses the reaction NAD(+) + (deoxyribonucleotide)n-3'-hydroxyl + 5'-phospho-(deoxyribonucleotide)m = (deoxyribonucleotide)n+m + AMP + beta-nicotinamide D-nucleotide.. DNA ligase that catalyzes the formation of phosphodiester linkages between 5'-phosphoryl and 3'-hydroxyl groups in double-stranded DNA using NAD as a coenzyme and as the energy source for the reaction. It is essential for DNA replication and repair of damaged DNA. In Hyphomonas neptunium (strain ATCC 15444), this protein is DNA ligase.